Consider the following 63-residue polypeptide: SPbeta prophage-derived uncharacterized protein YomP (63 aa).

This chain is SPbeta prophage-derived uncharacterized protein YomP (yomP), found in Bacillus subtilis (strain 168).